The following is an 87-amino-acid chain: Small ribosomal subunit protein uS15 (87 aa).

This sequence belongs to the universal ribosomal protein uS15 family. In terms of assembly, part of the 30S ribosomal subunit. Forms a bridge to the 50S subunit in the 70S ribosome, contacting the 23S rRNA.

One of the primary rRNA binding proteins, it binds directly to 16S rRNA where it helps nucleate assembly of the platform of the 30S subunit by binding and bridging several RNA helices of the 16S rRNA. Its function is as follows. Forms an intersubunit bridge (bridge B4) with the 23S rRNA of the 50S subunit in the ribosome. This Alkaliphilus oremlandii (strain OhILAs) (Clostridium oremlandii (strain OhILAs)) protein is Small ribosomal subunit protein uS15.